The following is an 855-amino-acid chain: Envelope glycoprotein H (855 aa).

The first 19 residues, 1–19, serve as a signal peptide directing secretion; it reads MSQPYLKIAILVAATIVSA. Residues 20–815 are Virion surface-facing; it reads IPVWTTPVST…ASYSAFKIPS (796 aa). Asn-42, Asn-48, Asn-52, Asn-68, Asn-126, Asn-189, and Asn-217 each carry an N-linked (GlcNAc...) asparagine; by host glycan. The segment at 174-195 is disordered; the sequence is PVGVVLSPPRTSPDVNNTIRDD. An interaction with gL region spans residues 247–310; sequence DTTQAIAYLG…YAGPIYKVYV (64 aa). N-linked (GlcNAc...) asparagine; by host glycosylation is found at Asn-503, Asn-679, Asn-773, and Asn-796. Residues 816-836 form a helical membrane-spanning segment; it reads TYLWASIGGLLLAILILYVIV. The Intravirion portion of the chain corresponds to 837–855; the sequence is KMLCGGVINNDYSLLLNSE.

It belongs to the herpesviridae glycoprotein H family. Interacts with glycoprotein L (gL); this interaction is necessary for the correct processing and cell surface expression of gH. The heterodimer gH/gL seems to interact with gB trimers during fusion. N-glycosylated, O-glycosylated, and sialylated.

Its subcellular location is the virion membrane. The protein localises to the host cell membrane. It is found in the host endosome membrane. Its function is as follows. The heterodimer glycoprotein H-glycoprotein L is required for the fusion of viral and plasma membranes leading to virus entry into the host cell. Following initial binding to host receptor, membrane fusion is mediated by the fusion machinery composed of gB and the heterodimer gH/gL. May also be involved in the fusion between the virion envelope and the outer nuclear membrane during virion morphogenesis. The sequence is that of Envelope glycoprotein H from Equine herpesvirus 4 (strain 1942) (EHV-4).